Reading from the N-terminus, the 320-residue chain is tRNA U34 carboxymethyltransferase (320 aa).

Residues Lys89, Trp103, Lys108, Gly128, 150-152, 179-180, Met194, Tyr198, and Arg313 each bind carboxy-S-adenosyl-L-methionine; these read DPT and LE.

This sequence belongs to the class I-like SAM-binding methyltransferase superfamily. CmoB family. Homotetramer.

It catalyses the reaction carboxy-S-adenosyl-L-methionine + 5-hydroxyuridine(34) in tRNA = 5-carboxymethoxyuridine(34) in tRNA + S-adenosyl-L-homocysteine + H(+). In terms of biological role, catalyzes carboxymethyl transfer from carboxy-S-adenosyl-L-methionine (Cx-SAM) to 5-hydroxyuridine (ho5U) to form 5-carboxymethoxyuridine (cmo5U) at position 34 in tRNAs. This Haemophilus ducreyi (strain 35000HP / ATCC 700724) protein is tRNA U34 carboxymethyltransferase.